The sequence spans 1214 residues: Filamin-A-interacting protein 1 (1214 aa).

Residues 1-15 (MRSRNQGGESSSNGH) show a composition bias toward polar residues. A disordered region spans residues 1-73 (MRSRNQGGES…ESEKKTKKPL (73 aa)). Basic and acidic residues-rich tracts occupy residues 32–47 (PSED…KGED) and 61–73 (PSGE…KKPL). The residue at position 138 (Ser-138) is a Phosphoserine. Coiled-coil stretches lie at residues 192–581 (DYMN…KLRS) and 624–778 (PEDN…ELEL). Disordered regions lie at residues 875-898 (KREN…GHPG) and 949-976 (KPRI…GPER). Ser-979 bears the Phosphoserine mark. Positions 1104–1192 (VSTGTVLRSP…TKFQPRAETQ (89 aa)) are disordered. Low complexity predominate over residues 1126-1140 (VTSTITITPVTTSST). Residues 1141-1157 (RGTQSVSGQDGSSQRPT) are compositionally biased toward polar residues. Residues 1169-1180 (AGKPVVAAPGAG) show a composition bias toward low complexity.

It belongs to the FILIP1 family. In terms of assembly, interacts with FLNA. Interacts with RHOD (in GTP-bound form).

Its subcellular location is the cytoplasm. It is found in the cytoskeleton. Functionally, by acting through a filamin-A/F-actin axis, it controls the start of neocortical cell migration from the ventricular zone. May be able to induce the degradation of filamin-A. The protein is Filamin-A-interacting protein 1 (Filip1) of Mus musculus (Mouse).